A 112-amino-acid chain; its full sequence is MNNYETVFILNPVLSDEQIKETVKKYEDFLVSKGAEMVAKEDWGLRKLAYAIQHKKSGFYHLFEYKAPGDAIEPLELEFRREERMMRYLTVKLDKHAIAWAEKRRKRNKEKA.

This sequence belongs to the bacterial ribosomal protein bS6 family.

Its function is as follows. Binds together with bS18 to 16S ribosomal RNA. In Christiangramia forsetii (strain DSM 17595 / CGMCC 1.15422 / KT0803) (Gramella forsetii), this protein is Small ribosomal subunit protein bS6.